The sequence spans 176 residues: NAD(P)H-quinone oxidoreductase subunit 6, chloroplastic (176 aa).

Helical transmembrane passes span 10–30, 32–52, 61–81, 92–112, and 152–172; these read FLLVFLGSGLLVGGLGVVLLP, PIFSAFSLGFVLVCISLLYIL, AQLLIYVGAINVLIIFAVMFM, LWTVGDGITSLVCTTILFSLI, and FFLPFELISIILLVALVGAIS.

Belongs to the complex I subunit 6 family. As to quaternary structure, NDH is composed of at least 16 different subunits, 5 of which are encoded in the nucleus.

The protein resides in the plastid. The protein localises to the chloroplast thylakoid membrane. It carries out the reaction a plastoquinone + NADH + (n+1) H(+)(in) = a plastoquinol + NAD(+) + n H(+)(out). The catalysed reaction is a plastoquinone + NADPH + (n+1) H(+)(in) = a plastoquinol + NADP(+) + n H(+)(out). Functionally, NDH shuttles electrons from NAD(P)H:plastoquinone, via FMN and iron-sulfur (Fe-S) centers, to quinones in the photosynthetic chain and possibly in a chloroplast respiratory chain. The immediate electron acceptor for the enzyme in this species is believed to be plastoquinone. Couples the redox reaction to proton translocation, and thus conserves the redox energy in a proton gradient. This Lobularia maritima (Sweet alyssum) protein is NAD(P)H-quinone oxidoreductase subunit 6, chloroplastic (ndhG).